The sequence spans 578 residues: Ketol-acid reductoisomerase, chloroplastic (578 aa).

The transit peptide at 1-52 (MAASTTLALSHPKTLAAAAAAAPKAPTAPAAVSFPVSHAACAPLAARRRAVT) directs the protein to the chloroplast. Positions 90-288 (VRGGRNLFPL…ALGSPFTFAT (199 aa)) constitute a KARI N-terminal Rossmann domain. Residues 111–118 (GVIGWGSQ), 144–149 (RKGSKS), and 183–187 (SDAAQ) contribute to the NADP(+) site. Histidine 208 is an active-site residue. KARI C-terminal knotted domains lie at 289-437 (TLEQ…RPEN) and 438-574 (DLGP…RPEL). Mg(2+)-binding residues include aspartate 297, glutamate 301, glutamate 474, and glutamate 478. Serine 500 is a binding site for substrate.

It belongs to the ketol-acid reductoisomerase family. In terms of assembly, homodimer. Requires Mg(2+) as cofactor.

It localises to the plastid. The protein resides in the chloroplast. It catalyses the reaction (2R)-2,3-dihydroxy-3-methylbutanoate + NADP(+) = (2S)-2-acetolactate + NADPH + H(+). The catalysed reaction is (2R,3R)-2,3-dihydroxy-3-methylpentanoate + NADP(+) = (S)-2-ethyl-2-hydroxy-3-oxobutanoate + NADPH + H(+). It functions in the pathway amino-acid biosynthesis; L-isoleucine biosynthesis; L-isoleucine from 2-oxobutanoate: step 2/4. Its pathway is amino-acid biosynthesis; L-valine biosynthesis; L-valine from pyruvate: step 2/4. In Oryza sativa subsp. japonica (Rice), this protein is Ketol-acid reductoisomerase, chloroplastic.